Reading from the N-terminus, the 78-residue chain is Large ribosomal subunit protein bL28 (78 aa).

It belongs to the bacterial ribosomal protein bL28 family.

This Corynebacterium aurimucosum (strain ATCC 700975 / DSM 44827 / CIP 107346 / CN-1) (Corynebacterium nigricans) protein is Large ribosomal subunit protein bL28.